The primary structure comprises 183 residues: Ribosome-recycling factor (183 aa).

It belongs to the RRF family.

It localises to the cytoplasm. Functionally, responsible for the release of ribosomes from messenger RNA at the termination of protein biosynthesis. May increase the efficiency of translation by recycling ribosomes from one round of translation to another. The sequence is that of Ribosome-recycling factor from Bifidobacterium longum subsp. infantis (strain ATCC 15697 / DSM 20088 / JCM 1222 / NCTC 11817 / S12).